The sequence spans 239 residues: 1-(5-phosphoribosyl)-5-[(5-phosphoribosylamino)methylideneamino] imidazole-4-carboxamide isomerase (239 aa).

The active-site Proton acceptor is Asp-8. Residue Asp-129 is the Proton donor of the active site.

This sequence belongs to the HisA/HisF family.

Its subcellular location is the cytoplasm. It carries out the reaction 1-(5-phospho-beta-D-ribosyl)-5-[(5-phospho-beta-D-ribosylamino)methylideneamino]imidazole-4-carboxamide = 5-[(5-phospho-1-deoxy-D-ribulos-1-ylimino)methylamino]-1-(5-phospho-beta-D-ribosyl)imidazole-4-carboxamide. It participates in amino-acid biosynthesis; L-histidine biosynthesis; L-histidine from 5-phospho-alpha-D-ribose 1-diphosphate: step 4/9. In Paramagnetospirillum magneticum (strain ATCC 700264 / AMB-1) (Magnetospirillum magneticum), this protein is 1-(5-phosphoribosyl)-5-[(5-phosphoribosylamino)methylideneamino] imidazole-4-carboxamide isomerase.